The following is a 233-amino-acid chain: Large ribosomal subunit protein uL1 (233 aa).

It belongs to the universal ribosomal protein uL1 family. In terms of assembly, part of the 50S ribosomal subunit.

In terms of biological role, binds directly to 23S rRNA. The L1 stalk is quite mobile in the ribosome, and is involved in E site tRNA release. Its function is as follows. Protein L1 is also a translational repressor protein, it controls the translation of the L11 operon by binding to its mRNA. The polypeptide is Large ribosomal subunit protein uL1 (Vibrio campbellii (strain ATCC BAA-1116)).